Here is a 351-residue protein sequence, read N- to C-terminus: Calcium uniporter protein, mitochondrial (351 aa).

A mitochondrion-targeting transit peptide spans M1–T50. Over V51 to T233 the chain is Mitochondrial matrix. Phosphoserine; by CaMK2 is present on residues S57 and S92. Residues V75 to R165 form an N-terminal MCU domain region. C97 carries the post-translational modification S-glutathionyl cysteine. The stretch at I192–E223 forms a coiled coil. The chain crosses the membrane as a helical span at residues L234–W255. Residues W256–I262 are Mitochondrial intermembrane-facing. The Selectivity filter signature appears at W260–Y268. The helical transmembrane segment at M263 to M284 threads the bilayer. E264 contacts Ca(2+). The interval T285–V290 is juxtamembrane helix. At T285 to D351 the chain is on the mitochondrial matrix side. Positions R311–Q339 form a coiled coil. At K332 the chain carries N6-acetyllysine.

The protein belongs to the MCU (TC 1.A.77) family. Homotetramer. Component of the uniplex complex, composed of MCU, EMRE/SMDT1, MICU1 and MICU2 (or MICU3) in a 4:4:1:1 stoichiometry. Interacts with CCDC109B/MCUB; this inhibits channel activity. Interacts with MCUR1. Interactions with MICU1 and MCUR1 are mutually exclusive. Interacts with SLC25A23. Phosphorylation by CaMK2 in heart leads to increased MCU current. The regulation of MCU by CaMK2 is however subject to discussion: another group was unable to reproduce these results. Phosphorylated on tyrosines by PTK2B/PYK2, promoting oligomerization. In terms of processing, glutathionylation at Cys-97 in response to reactive oxygen species (ROS) promotes MCU higher-order assembly, leading to constitutive activation of the MCU channel and mitochondrial calcium overload. Post-translationally, undergoes proteolytic degradation by SPG7.

It localises to the mitochondrion inner membrane. It catalyses the reaction Ca(2+)(in) = Ca(2+)(out). With respect to regulation, MCU channel activity is regulated by the heterodimer composed of MICU1 and either MICU2 or MICU3, which act as calcium-sensors. At low calcium levels, MICU1 occludes the pore of the MCU channel, preventing mitochondrial calcium uptake. At higher calcium levels, calcium-binding to MICU1 and MICU2 (or MICU3) induces a conformational change that weakens MCU-MICU1 interactions and moves the MICU1-MICU2 heterodimer away from the pore, allowing calcium permeation through the channel. MCU channel activity is gated by EMRE/SMDT1 via the juxtamembrane helix loop. Inhibited by ruthenium red or its derivative Ru360. Functionally, channel-forming and calcium-conducting subunit of the mitochondrial inner membrane calcium uniporter complex (uniplex), which mediates calcium uptake into the mitochondrial matrix. MCU channel activity is regulated by the calcium-sensor subunits of the uniplex MICU1 and MICU2 (or MICU3). Mitochondrial calcium homeostasis plays key roles in cellular physiology and regulates ATP production, cytoplasmic calcium signals and activation of cell death pathways. Involved in buffering the amplitude of systolic calcium rises in cardiomyocytes. While dispensable for baseline homeostatic cardiac function, acts as a key regulator of short-term mitochondrial calcium loading underlying a 'fight-or-flight' response during acute stress: acts by mediating a rapid increase of mitochondrial calcium in pacemaker cells. Participates in mitochondrial permeability transition during ischemia-reperfusion injury. Mitochondrial calcium uptake in skeletal muscle cells is involved in muscle size in adults. Regulates synaptic vesicle endocytosis kinetics in central nerve terminal. Regulates glucose-dependent insulin secretion in pancreatic beta-cells by regulating mitochondrial calcium uptake. Involved in antigen processing and presentation. The sequence is that of Calcium uniporter protein, mitochondrial from Homo sapiens (Human).